Consider the following 318-residue polypeptide: Ferredoxin--NADP reductase (318 aa).

The FAD site is built by Asp-33, Gln-41, Tyr-46, Val-84, Phe-115, Asp-276, and Thr-316.

This sequence belongs to the ferredoxin--NADP reductase type 2 family. As to quaternary structure, homodimer. Requires FAD as cofactor.

It catalyses the reaction 2 reduced [2Fe-2S]-[ferredoxin] + NADP(+) + H(+) = 2 oxidized [2Fe-2S]-[ferredoxin] + NADPH. The chain is Ferredoxin--NADP reductase from Lactobacillus gasseri (strain ATCC 33323 / DSM 20243 / BCRC 14619 / CIP 102991 / JCM 1131 / KCTC 3163 / NCIMB 11718 / NCTC 13722 / AM63).